We begin with the raw amino-acid sequence, 264 residues long: Phosphonoacetaldehyde hydrolase (264 aa).

Catalysis depends on Asp-9, which acts as the Nucleophile. Residues Asp-9 and Ala-11 each coordinate Mg(2+). Lys-50 serves as the catalytic Schiff-base intermediate with substrate. Asp-183 is a Mg(2+) binding site.

It belongs to the HAD-like hydrolase superfamily. PhnX family. In terms of assembly, homodimer. Requires Mg(2+) as cofactor.

The catalysed reaction is phosphonoacetaldehyde + H2O = acetaldehyde + phosphate + H(+). Its function is as follows. Involved in phosphonate degradation. The polypeptide is Phosphonoacetaldehyde hydrolase (Bacillus mycoides (strain KBAB4) (Bacillus weihenstephanensis)).